A 370-amino-acid polypeptide reads, in one-letter code: MAFAHHAEAAQSSIVSGSAPGFAAGVTGGGDATPVYPTTIDELKEYLTSSSPQNIVIEGTFDFVGSEGTKTYQACNIYDCTPDNGGQAILNTLGGCGDTSTYDVTIDVAGYQGINVASDKTLVGKGTGAVLNGKGLRFVGVSNIIIQNIEITNLNPKYVWGGDALTFSDTNQIWIDHVTTSSLGRQHYSFGQESDNAITISNSFINGKTDYSATCDGHTYWGLELVGSSDQITFYKNYVYYTSGRSPALSGNTLFHAVNSVWADNSGHAIEGTDNGMGLFEGNVFNNVPTIVQSGFVGQLFSSESANLSQCETSLGRDCVTNAYTSSGSFSYDDDGFFVDFENLPIVSAASASSIASTVPSDAGNTLSST.

A disulfide bond links cysteine 75 and cysteine 96. Arginine 245 is an active-site residue. The N-linked (GlcNAc...) asparagine glycan is linked to asparagine 307. A disulfide bridge connects residues cysteine 311 and cysteine 319.

This sequence belongs to the polysaccharide lyase 1 family.

The protein resides in the secreted. It catalyses the reaction Eliminative cleavage of (1-&gt;4)-alpha-D-galacturonan methyl ester to give oligosaccharides with 4-deoxy-6-O-methyl-alpha-D-galact-4-enuronosyl groups at their non-reducing ends.. In terms of biological role, pectinolytic enzymes consist of four classes of enzymes: pectin lyase, polygalacturonase, pectin methylesterase and rhamnogalacturonase. Among pectinolytic enzymes, pectin lyase is the most important in depolymerization of pectin, since it cleaves internal glycosidic bonds of highly methylated pectins. The protein is Probable pectin lyase E (pelE) of Aspergillus niger.